The chain runs to 290 residues: Protein MGF 110-9L (290 aa).

An N-terminal signal peptide occupies residues methionine 1–serine 19. An A repeat occupies methionine 1–alanine 160. Helical transmembrane passes span valine 128–valine 148 and leucine 163–asparagine 183. The stretch at threonine 161–leucine 290 is one B repeat.

Belongs to the asfivirus MGF 110 family.

The protein resides in the membrane. The protein is Protein MGF 110-9L of Ornithodoros (relapsing fever ticks).